The chain runs to 338 residues: UDP-3-O-acylglucosamine N-acyltransferase (338 aa).

H239 acts as the Proton acceptor in catalysis.

Belongs to the transferase hexapeptide repeat family. LpxD subfamily. As to quaternary structure, homotrimer.

The catalysed reaction is a UDP-3-O-[(3R)-3-hydroxyacyl]-alpha-D-glucosamine + a (3R)-hydroxyacyl-[ACP] = a UDP-2-N,3-O-bis[(3R)-3-hydroxyacyl]-alpha-D-glucosamine + holo-[ACP] + H(+). The protein operates within bacterial outer membrane biogenesis; LPS lipid A biosynthesis. Functionally, catalyzes the N-acylation of UDP-3-O-acylglucosamine using 3-hydroxyacyl-ACP as the acyl donor. Is involved in the biosynthesis of lipid A, a phosphorylated glycolipid that anchors the lipopolysaccharide to the outer membrane of the cell. This chain is UDP-3-O-acylglucosamine N-acyltransferase, found in Xylella fastidiosa (strain M12).